Reading from the N-terminus, the 1274-residue chain is DENN domain-containing protein 3 (1274 aa).

The tract at residues 65-108 (GQVPGASCALGKGRRRSFRKKREKPRMEPWKSHPGDSKGPDSED) is disordered. The uDENN domain occupies 75–245 (GKGRRRSFRK…LIPSPPPGPL (171 aa)). Positions 76 to 88 (KGRRRSFRKKREK) are enriched in basic residues. A compositionally biased stretch (basic and acidic residues) spans 89–105 (PRMEPWKSHPGDSKGPD). Residues 268 to 400 (IVDLDLHLPL…PLLLAQTFIQ (133 aa)) form the cDENN domain. One can recognise a dDENN domain in the interval 402-506 (VQSLQLHPDL…KARLNGRMDA (105 aa)). A linker region spans residues 520–970 (RIDRMLISPR…KHKINPSAGE (451 aa)). Ser-554 and Ser-572 each carry phosphoserine; by ULK1. A Phosphotyrosine modification is found at Tyr-940. WD repeat units lie at residues 975 to 1013 (AIEV…VFDA), 1019 to 1055 (HQHC…IINV), 1059 to 1099 (SCNK…AWNV), 1103 to 1140 (RVIS…TPQG), 1146 to 1181 (LKHP…MWSL), 1186 to 1228 (QPPQ…IYVM), and 1234 to 1273 (TVEK…IWKV).

In terms of assembly, forms oligomers. Interacts with 6 of the 7 known isoforms of 14-3-3 proteins.

The protein localises to the cytoplasm. Functionally, guanine nucleotide exchange factor (GEF) activating Rab12. Promotes the exchange of GDP to GTP, converting inactive GDP-bound Rab12 into its active GTP-bound form. Regulates autophagy in response to starvation through Rab12 activation. Starvation leads to ULK1/2-dependent phosphorylation of Ser-554 and Ser-572, which in turn allows recruitment of 14-3-3 adapter proteins and leads to up-regulation of GEF activity towards Rab12. Also plays a role in protein transport from recycling endosomes to lysosomes, regulating, for instance, the degradation of the transferrin receptor and of the amino acid transporter PAT4. Starvation also induces phosphorylation at Tyr-940, which leads to up-regulated GEF activity and initiates autophagy. The chain is DENN domain-containing protein 3 (Dennd3) from Mus musculus (Mouse).